A 240-amino-acid polypeptide reads, in one-letter code: Glycerol uptake facilitator protein 3 (240 aa).

2 helical membrane-spanning segments follow: residues 11-31 and 41-61; these read LGEF…VAGV and AGWV…VYAS. The NPA 1 signature appears at 70 to 72; the sequence is NPA. A run of 3 helical transmembrane segments spans residues 88–108, 137–157, and 162–182; these read VIPY…VVWL, FWNF…LLAF, and FTAG…GLSL. The short motif at 191–193 is the NPA 2 element; that stretch reads NPA. Residues 219-239 traverse the membrane as a helical segment; that stretch reads WVPIAGPLVGGALGALLFNVL.

Belongs to the MIP/aquaporin (TC 1.A.8) family.

Its subcellular location is the cell membrane. Its function is as follows. Transporter that facilitates the transmembrane diffusion of water, dihydroxyacetone, glycerol and H(2)O(2). Is not permeable to urea and D/L-lactic acid. The polypeptide is Glycerol uptake facilitator protein 3 (Lactiplantibacillus plantarum (strain ATCC BAA-793 / NCIMB 8826 / WCFS1) (Lactobacillus plantarum)).